The following is a 1083-amino-acid chain: Solute carrier family 12 member 7 (1083 aa).

The segment at 1 to 51 is disordered; it reads MPTNFTVVPVEARADGAGDEAAERTEEPGSPESADPACPTPGDGNPRENSP. Residues 1 to 119 are Cytoplasmic-facing; that stretch reads MPTNFTVVPV…RREIKAPRMG (119 aa). Residues 12–27 are compositionally biased toward basic and acidic residues; that stretch reads ARADGAGDEAAERTEE. A phosphoserine mark is found at serine 30, serine 33, serine 50, and serine 62. Residues 120–142 traverse the membrane as a discontinuously helical segment; that stretch reads TFIGVYLPCLQNILGVILFLRLT. K(+) contacts are provided by asparagine 131 and isoleucine 132. Valine 135 lines the chloride pocket. Topologically, residues 143–149 are extracellular; it reads WIVGAAG. A helical transmembrane segment spans residues 150–172; it reads VLESFLIVAMCCTCTMLTAISMS. Over 173 to 196 the chain is Cytoplasmic; the sequence is AIATNGVVPAGGSYYMISRSLGPE. Residues 197–225 form a helical membrane-spanning segment; that stretch reads FGGAVGLCFYLGTTFAGAMYILGTIEIFL. At 226-249 the chain is on the extracellular side; that stretch reads TYISPSAAIFQAETADGEAAALLN. 2 helical membrane passes run 250-271 and 272-300; these read NMRV…VGVK and YVNK…KTAF. The Extracellular portion of the chain corresponds to 301–419; the sequence is APPDIPVCLL…PYVLTDIMTY (119 aa). N-linked (GlcNAc...) asparagine glycans are attached at residues asparagine 312, asparagine 331, and asparagine 360. Residues 420–440 traverse the membrane as a helical segment; it reads FTMLVGIYFPSVTGIMAGSNR. Positions 429 and 432 each coordinate K(+). Residue proline 429 coordinates chloride. Residues glycine 433 and isoleucine 434 each coordinate chloride. The Cytoplasmic segment spans residues 441 to 450; the sequence is SGDLKDAQKS. Residues 451-473 form a helical membrane-spanning segment; it reads IPTGTILAIVTTSFIYLSCIVLF. Over 474–504 the chain is Extracellular; that stretch reads GACIEGVVLRDKFGEALQGNLVIGMLAWPSP. A helical membrane pass occupies residues 505-531; that stretch reads WVIVIGSFFSTCGAGLQSLTGAPRLLQ. Residues 532 to 554 lie on the Cytoplasmic side of the membrane; it reads AIARDGIIPFLQVFGHGKANGEP. 2 helical membrane passes run 555–573 and 574–598; these read TWAL…LIAS and LDSV…ACAV. Tyrosine 589 is a binding site for chloride. The Cytoplasmic segment spans residues 599–612; the sequence is QTLLRTPNWRPRFK. The next 2 helical transmembrane spans lie at 613 to 635 and 636 to 651; these read FYHW…ICSW and YYAL…IYKY. The Cytoplasmic portion of the chain corresponds to 652-1083; the sequence is IEYRGAEKEW…GGREVITIYS (432 aa). Residues 664–680 form a scissor helix region; it reads GIRGLSLNAARYALLRV. Phosphothreonine is present on residues threonine 973 and threonine 980.

It belongs to the SLC12A transporter family. K/Cl co-transporter subfamily. Homodimer; adopts a domain-swap conformation at the scissor helices connecting the transmembrane domain and C-terminal domain. Heterodimer with K-Cl cotransporter SLC12A5. Widely expressed with highest levels in kidney, liver and pancreas. Expressed in choroid plexus and suprachiasmatic nucleus.

The protein resides in the cell membrane. The enzyme catalyses K(+)(in) + chloride(in) = K(+)(out) + chloride(out). Its activity is regulated as follows. Activated by N-ethylmaleimide (NEM). Inhibited by furosemide, DIDS and bumetanide. The inhibition is much stronger in the presence of 50 mM K(+) in the uptake medium. Inhibited by DIOA. Inhibited by WNK3. Mediates electroneutral potassium-chloride cotransport when activated by cell swelling. May mediate K(+) uptake into Deiters' cells in the cochlea and contribute to K(+) recycling in the inner ear. Important for the survival of cochlear outer and inner hair cells and the maintenance of the organ of Corti. May be required for basolateral Cl(-) extrusion in the kidney and contribute to renal acidification. This chain is Solute carrier family 12 member 7, found in Rattus norvegicus (Rat).